We begin with the raw amino-acid sequence, 622 residues long: Apical membrane antigen 1 (622 aa).

The signal sequence occupies residues 1-24 (MRKLYCVLLLSAFEFTYMINFGRG). The Extracellular portion of the chain corresponds to 25-546 (QNYWEHPYQN…EHKPTYDNMK (522 aa)). 5 disulfide bridges follow: Cys149–Cys302, Cys217–Cys247, Cys263–Cys275, Cys320–Cys418, and Cys337–Cys409. N-linked (GlcNAc...) asparagine glycosylation occurs at Asn162. Residues Asn286, Asn371, Asn421, Asn422, and Asn499 are each glycosylated (N-linked (GlcNAc...) asparagine). 3 cysteine pairs are disulfide-bonded: Cys443-Cys502, Cys490-Cys507, and Cys492-Cys509. The helical transmembrane segment at 547-567 (IIIASSAAVAVLATILMVYLY) threads the bilayer. Residues 568 to 622 (KRKGNAEKYDKMDQPQDYGKSTSRNDEMLDPEASFWGEEKRASHTTPVLMEKPYY) lie on the Cytoplasmic side of the membrane. The segment at 577–607 (DKMDQPQDYGKSTSRNDEMLDPEASFWGEEK) is disordered.

This sequence belongs to the apicomplexan parasites AMA1 family.

The protein resides in the membrane. Its function is as follows. Involved in parasite invasion of erythrocytes. This chain is Apical membrane antigen 1 (AMA-1), found in Plasmodium falciparum (isolate Camp / Malaysia).